Consider the following 423-residue polypeptide: Glycine amidinotransferase, mitochondrial (423 aa).

The transit peptide at 1 to 43 (MLRVRCLRGGSRGAEAVHYIGSRLGGSLTGWVQRTFQSTQAAT) directs the protein to the mitochondrion. 2 positions are modified to phosphoserine: serine 46 and serine 49. Aspartate 170 is a binding site for arginine. Catalysis depends on residues aspartate 254 and histidine 303. The arginine site is built by aspartate 305, arginine 322, serine 354, and serine 355. At lysine 385 the chain carries N6-acetyllysine. Cysteine 407 serves as the catalytic Amidino-cysteine intermediate.

This sequence belongs to the amidinotransferase family. As to quaternary structure, homodimer. Expressed in kidney, brain, gonads, uterus, and embryonic head, chest and abdomen. Maternally expressed in the placenta and yolk sac of embryos.

The protein resides in the mitochondrion inner membrane. It catalyses the reaction L-arginine + glycine = guanidinoacetate + L-ornithine. The catalysed reaction is 4-aminobutanoate + L-arginine = 4-guanidinobutanoate + L-ornithine. The enzyme catalyses beta-alanine + L-arginine = 3-guanidinopropanoate + L-ornithine. It carries out the reaction taurine + L-arginine = taurocyamine + L-ornithine. The protein operates within amine and polyamine biosynthesis; creatine biosynthesis; creatine from L-arginine and glycine: step 1/2. Transamidinase that catalyzes the transfer of the amidino group of L-arginine onto the amino moiety of acceptor metabolites such as glycine, beta-alanine, gamma-aminobutyric acid (GABA) and taurine yielding the corresponding guanidine derivatives. Catalyzes the rate-limiting step of creatine biosynthesis, namely the transfer of the amidino group from L-arginine to glycine to generate guanidinoacetate, which is then methylated by GAMT to form creatine. Provides creatine as a source for ATP generation in tissues with high energy demands, in particular skeletal muscle, heart and brain. This Mus musculus (Mouse) protein is Glycine amidinotransferase, mitochondrial (Gatm).